We begin with the raw amino-acid sequence, 514 residues long: ATP synthase subunit alpha (514 aa).

170 to 177 (GDRQIGKS) lines the ATP pocket.

Belongs to the ATPase alpha/beta chains family. F-type ATPases have 2 components, CF(1) - the catalytic core - and CF(0) - the membrane proton channel. CF(1) has five subunits: alpha(3), beta(3), gamma(1), delta(1), epsilon(1). CF(0) has three main subunits: a(1), b(2) and c(9-12). The alpha and beta chains form an alternating ring which encloses part of the gamma chain. CF(1) is attached to CF(0) by a central stalk formed by the gamma and epsilon chains, while a peripheral stalk is formed by the delta and b chains.

The protein localises to the cell inner membrane. It carries out the reaction ATP + H2O + 4 H(+)(in) = ADP + phosphate + 5 H(+)(out). Its function is as follows. Produces ATP from ADP in the presence of a proton gradient across the membrane. The alpha chain is a regulatory subunit. The polypeptide is ATP synthase subunit alpha (Chromohalobacter salexigens (strain ATCC BAA-138 / DSM 3043 / CIP 106854 / NCIMB 13768 / 1H11)).